A 206-amino-acid chain; its full sequence is Urease accessory protein UreG (206 aa).

13-20 (GPVGSGKT) contributes to the GTP binding site.

It belongs to the SIMIBI class G3E GTPase family. UreG subfamily. Homodimer. UreD, UreF and UreG form a complex that acts as a GTP-hydrolysis-dependent molecular chaperone, activating the urease apoprotein by helping to assemble the nickel containing metallocenter of UreC. The UreE protein probably delivers the nickel.

Its subcellular location is the cytoplasm. Its function is as follows. Facilitates the functional incorporation of the urease nickel metallocenter. This process requires GTP hydrolysis, probably effectuated by UreG. The sequence is that of Urease accessory protein UreG from Haloquadratum walsbyi (strain DSM 16790 / HBSQ001).